The sequence spans 370 residues: Subtilisin-like protease (370 aa).

Positions 1 to 17 are cleaved as a signal peptide; it reads MIASIVFFIVLVDGVAT. Active-site charge relay system residues include D13, H35, and S190. The Peptidase S8 domain occupies 18 to 261; that stretch reads GSPNALVTDF…FGEVSPSRLE (244 aa). The P/Homo B domain occupies 240–370; sequence RVTDRWTHRN…TTEGTCHGIR (131 aa).

This sequence belongs to the peptidase S8 family.

The protein is Subtilisin-like protease (ORF47) of Ictalurid herpesvirus 1 (strain Auburn) (IcHV-1).